We begin with the raw amino-acid sequence, 465 residues long: Clusterin-like protein 1 (465 aa).

The first 20 residues, 1 to 20, serve as a signal peptide directing secretion; sequence MKPSLLVFTVYLLWLKDCHC. Residues 62–106 are a coiled coil; that stretch reads MMERREEEHTNLMKTLKKCKEEKQEALKLMNEVQEHLEEEESLCQ. Cystine bridges form between Cys-105–Cys-333, Cys-116–Cys-325, Cys-119–Cys-322, and Cys-124–Cys-315. 7 N-linked (GlcNAc...) asparagine glycosylation sites follow: Asn-196, Asn-257, Asn-285, Asn-311, Asn-351, Asn-412, and Asn-430.

The protein belongs to the clusterin family. As to expression, retina-specific (at protein level). In the light-adapted retina, expressed in the outer segment of cone photoreceptors. In the dark-adapted retina, strongly expressed in the outer plexiform layer in the region of contact between the cone pedicles and second order neurons with little or no expression in the cone photoreceptor outer segments.

Its subcellular location is the secreted. This is Clusterin-like protein 1 (CLUL1) from Canis lupus familiaris (Dog).